The sequence spans 266 residues: Chymotrypsin-like elastase family member 1 (266 aa).

The first 16 residues, 1–16, serve as a signal peptide directing secretion; it reads MLRFLVFASLVLCGHS. Positions 17–26 are cleaved as a propeptide — activation peptide; that stretch reads TEDVPETDAR. The region spanning 27-264 is the Peptidase S1 domain; sequence VVGGAEARRN…YISWMNNVIA (238 aa). Cys-56 and Cys-72 form a disulfide bridge. The active-site Charge relay system is the His-71. Positions 85, 87, 90, and 95 each coordinate Ca(2+). Asn-87 carries N-linked (GlcNAc...) asparagine glycosylation. The Charge relay system role is filled by Asp-119. 3 disulfide bridges follow: Cys-153–Cys-220, Cys-184–Cys-200, and Cys-210–Cys-240. The active-site Charge relay system is the Ser-214.

The protein belongs to the peptidase S1 family. Elastase subfamily. Ca(2+) is required as a cofactor.

The protein localises to the secreted. It carries out the reaction Hydrolysis of proteins, including elastin. Preferential cleavage: Ala-|-Xaa.. Serine proteases that hydrolyze many proteins in addition to elastin. In Mus musculus (Mouse), this protein is Chymotrypsin-like elastase family member 1 (Cela1).